Here is a 358-residue protein sequence, read N- to C-terminus: Alanine racemase (358 aa).

Residue lysine 35 is the Proton acceptor; specific for D-alanine of the active site. Lysine 35 is modified (N6-(pyridoxal phosphate)lysine). Residue arginine 130 coordinates substrate. Tyrosine 255 functions as the Proton acceptor; specific for L-alanine in the catalytic mechanism. Substrate is bound at residue methionine 303.

This sequence belongs to the alanine racemase family. Pyridoxal 5'-phosphate serves as cofactor.

It catalyses the reaction L-alanine = D-alanine. The protein operates within amino-acid biosynthesis; D-alanine biosynthesis; D-alanine from L-alanine: step 1/1. Its function is as follows. Catalyzes the interconversion of L-alanine and D-alanine. May also act on other amino acids. This Shewanella baltica (strain OS223) protein is Alanine racemase (alr).